We begin with the raw amino-acid sequence, 239 residues long: Adapter protein MecA (239 aa).

A compositionally biased stretch (basic and acidic residues) spans 118–128 (EQRTKEKEAQG). Positions 118–137 (EQRTKEKEAQGSKRQKSSAR) are disordered.

This sequence belongs to the MecA family. As to quaternary structure, homodimer.

Enables the recognition and targeting of unfolded and aggregated proteins to the ClpC protease or to other proteins involved in proteolysis. The protein is Adapter protein MecA of Staphylococcus aureus (strain bovine RF122 / ET3-1).